Reading from the N-terminus, the 90-residue chain is uncharacterized protein (90 aa).

The chain crosses the membrane as a helical span at residues 69 to 89 (LLYIFLGAMIVIIFLVIKNQL).

It belongs to the IIV-6 466R family.

It localises to the membrane. This is an uncharacterized protein from Invertebrate iridescent virus 6 (IIV-6).